We begin with the raw amino-acid sequence, 345 residues long: MRVTDFSFDLPDELIARYPMAQRNASRLLTLDGNTGTLADKQFTDLLGMINPGDLMVFNNTRVIPARLFGQKASGGKLEILVERMLDDKRILAHVRSSKSPKVDSIIHLDGGYEMKMAARHDALFELELLSDLTILEVLEAVGHMPLPPYIDRPDEDADKERYQTVYNQNPGAVAAPTAGLHFDDAMLEALKAKGVNIAFVTLHVGAGTFQPVRVDNVLEHKMHSEWANVPQDVVDLIVQTKAAGKRVVAVGTTSVRSLESAARASEGELKAFSGDTDIFIYPGYQFQIVDAMITNFHLPESTLIMLVSAFAGFDHVMAAYQHAITQKYRFFSYGDAMFVTKKAH.

It belongs to the QueA family. As to quaternary structure, monomer.

The protein localises to the cytoplasm. It carries out the reaction 7-aminomethyl-7-carbaguanosine(34) in tRNA + S-adenosyl-L-methionine = epoxyqueuosine(34) in tRNA + adenine + L-methionine + 2 H(+). Its pathway is tRNA modification; tRNA-queuosine biosynthesis. Functionally, transfers and isomerizes the ribose moiety from AdoMet to the 7-aminomethyl group of 7-deazaguanine (preQ1-tRNA) to give epoxyqueuosine (oQ-tRNA). This is S-adenosylmethionine:tRNA ribosyltransferase-isomerase from Shewanella sp. (strain MR-7).